The sequence spans 435 residues: Ribulose bisphosphate carboxylase-like protein (435 aa).

3 residues coordinate Mg(2+): lysine 198, aspartate 200, and glutamate 201. Lysine 198 bears the N6-carboxylysine mark.

The protein belongs to the RuBisCO large chain family. Type IV subfamily. As to quaternary structure, homodimer. Mg(2+) is required as a cofactor.

Functionally, may be involved in sulfur metabolism and oxidative stress response. Does not show RuBisCO activity. In Chlorobaculum tepidum (strain ATCC 49652 / DSM 12025 / NBRC 103806 / TLS) (Chlorobium tepidum), this protein is Ribulose bisphosphate carboxylase-like protein.